The chain runs to 249 residues: Hydroxyacylglutathione hydrolase (249 aa).

7 residues coordinate Zn(2+): His54, His56, Asp58, His59, His113, Asp138, and His176.

The protein belongs to the metallo-beta-lactamase superfamily. Glyoxalase II family. Monomer. Zn(2+) is required as a cofactor.

The enzyme catalyses an S-(2-hydroxyacyl)glutathione + H2O = a 2-hydroxy carboxylate + glutathione + H(+). The protein operates within secondary metabolite metabolism; methylglyoxal degradation; (R)-lactate from methylglyoxal: step 2/2. Functionally, thiolesterase that catalyzes the hydrolysis of S-D-lactoyl-glutathione to form glutathione and D-lactic acid. The polypeptide is Hydroxyacylglutathione hydrolase (Parasynechococcus marenigrum (strain WH8102)).